A 383-amino-acid chain; its full sequence is tRNA pseudouridine synthase B (383 aa).

Residue D53 is the Nucleophile of the active site.

This sequence belongs to the pseudouridine synthase TruB family. Type 1 subfamily.

It catalyses the reaction uridine(55) in tRNA = pseudouridine(55) in tRNA. Its function is as follows. Responsible for synthesis of pseudouridine from uracil-55 in the psi GC loop of transfer RNAs. The chain is tRNA pseudouridine synthase B from Tropheryma whipplei (strain TW08/27) (Whipple's bacillus).